The sequence spans 437 residues: Vacuolar cation/proton exchanger 2 (437 aa).

The tract at residues 1-29 (MMGAEKAEGMEELELEEGGGSPSPSPMTA) is disordered. Residues 1 to 65 (MMGAEKAEGM…KWRRALTSVR (65 aa)) are Cytoplasmic-facing. The chain crosses the membrane as a helical span at residues 66 to 86 (VVILQAKINVLLPFGPLAVML). Residues 87-88 (HY) lie on the Extracellular side of the membrane. Residues 89-109 (LSANHQGWVFLFSLIGITPLA) form a helical membrane-spanning segment. Residues 110 to 126 (ERLGYATEQLALYTGPT) lie on the Cytoplasmic side of the membrane. A helical transmembrane segment spans residues 127-147 (IGGLLNATFGNATEMIISLYA). The segment at 136 to 171 (GNATEMIISLYALKNGMIRVVQQSLLGSILSNMLLV) is cation selection. Over 148-161 (LKNGMIRVVQQSLL) the chain is Extracellular. A helical transmembrane segment spans residues 162–182 (GSILSNMLLVLGCAFFAGGLV). Residues 183 to 194 (HPSRDQVFNKAS) lie on the Cytoplasmic side of the membrane. Residues 195-215 (AVVNSGLLLMAVLGLMFPAVL) form a helical membrane-spanning segment. Residues 216-228 (HFTHSEVQYGKSE) are Extracellular-facing. Residues 229 to 249 (VSLSRFSSCIMLVAYASYLFF) form a helical membrane-spanning segment. Residues 250–281 (QLKSQRSLYSPIGEQEEEVTEDEEEEKEITQG) are Cytoplasmic-facing. Residues 282-302 (EAICWLFVLTIWISILSGYLV) traverse the membrane as a helical segment. The Extracellular portion of the chain corresponds to 303 to 310 (DAIQGASE). Residues 311–331 (SLNMPVAFISVILLPIVGNAA) form a helical membrane-spanning segment. The segment at 328–363 (GNAAEHASAIMFAMKDKLDITLGVAIGSSTQISMFV) is cation selection. Residues 332-352 (EHASAIMFAMKDKLDITLGVA) are Cytoplasmic-facing. A helical transmembrane segment spans residues 353 to 373 (IGSSTQISMFVIPFCVVIGWI). Residues 374–379 (MGQQMD) lie on the Extracellular side of the membrane. A helical membrane pass occupies residues 380–400 (LNFQLFETATLFITVLVVAFM). Residues 401–408 (LQEGTSNY) are Cytoplasmic-facing. The chain crosses the membrane as a helical span at residues 409 to 429 (FKGLMLILCYLIVAASFFVHV). Over 430 to 437 (DPDSSNNK) the chain is Extracellular.

The protein belongs to the Ca(2+):cation antiporter (CaCA) (TC 2.A.19) family. Cation/proton exchanger (CAX) subfamily. As to expression, expressed in roots and shoots.

It localises to the vacuole membrane. Functionally, vacuolar cation/proton exchanger (CAX). Translocates Ca(2+) and other metal ions into vacuoles using the proton gradient formed by H(+)-ATPase and H(+)-pyrophosphatase. The polypeptide is Vacuolar cation/proton exchanger 2 (CAX2) (Oryza sativa subsp. japonica (Rice)).